We begin with the raw amino-acid sequence, 292 residues long: Protein/nucleic acid deglycase HchA (292 aa).

Positions 1–12 are enriched in polar residues; it reads MSQDVNELSKQP. Residues 1–23 are disordered; it reads MSQDVNELSKQPTPDKAEDNAFF. The Nucleophile role is filled by Cys190.

Belongs to the peptidase C56 family. HchA subfamily.

The protein resides in the cytoplasm. The enzyme catalyses N(omega)-(1-hydroxy-2-oxopropyl)-L-arginyl-[protein] + H2O = lactate + L-arginyl-[protein] + H(+). It carries out the reaction N(6)-(1-hydroxy-2-oxopropyl)-L-lysyl-[protein] + H2O = lactate + L-lysyl-[protein] + H(+). The catalysed reaction is S-(1-hydroxy-2-oxopropyl)-L-cysteinyl-[protein] + H2O = lactate + L-cysteinyl-[protein] + H(+). It catalyses the reaction N(omega)-(1-hydroxy-2-oxoethyl)-L-arginyl-[protein] + H2O = L-arginyl-[protein] + glycolate + H(+). The enzyme catalyses N(6)-(1-hydroxy-2-oxoethyl)-L-lysyl-[protein] + H2O = glycolate + L-lysyl-[protein] + H(+). It carries out the reaction S-(1-hydroxy-2-oxoethyl)-L-cysteinyl-[protein] + H2O = glycolate + L-cysteinyl-[protein] + H(+). The catalysed reaction is N(2)-(1-hydroxy-2-oxopropyl)-dGTP + H2O = lactate + dGTP + H(+). It catalyses the reaction N(2)-(1-hydroxy-2-oxopropyl)-GTP + H2O = lactate + GTP + H(+). The enzyme catalyses N(2)-(1-hydroxy-2-oxopropyl)-GDP + H2O = lactate + GDP + H(+). It carries out the reaction N(2)-(1-hydroxy-2-oxopropyl)-GMP + H2O = lactate + GMP + H(+). The catalysed reaction is N(2)-(1-hydroxy-2-oxoethyl)-dGTP + H2O = dGTP + glycolate + H(+). It catalyses the reaction N(2)-(1-hydroxy-2-oxoethyl)-GTP + H2O = glycolate + GTP + H(+). The enzyme catalyses N(2)-(1-hydroxy-2-oxoethyl)-GDP + H2O = glycolate + GDP + H(+). It carries out the reaction N(2)-(1-hydroxy-2-oxoethyl)-GMP + H2O = glycolate + GMP + H(+). The catalysed reaction is an N(2)-(1-hydroxy-2-oxopropyl)-guanosine in RNA + H2O = a guanosine in RNA + lactate + H(+). It catalyses the reaction an N(2)-(1-hydroxy-2-oxopropyl)-2'-deoxyguanosine in DNA + H2O = a 2'-deoxyguanosine in DNA + lactate + H(+). The enzyme catalyses an N(2)-(1-hydroxy-2-oxoethyl)-guanosine in RNA + H2O = a guanosine in RNA + glycolate + H(+). It carries out the reaction an N(2)-(1-hydroxy-2-oxoethyl)-2'-deoxyguanosine in DNA + H2O = a 2'-deoxyguanosine in DNA + glycolate + H(+). Protein and nucleotide deglycase that catalyzes the deglycation of the Maillard adducts formed between amino groups of proteins or nucleotides and reactive carbonyl groups of glyoxals. Thus, functions as a protein deglycase that repairs methylglyoxal- and glyoxal-glycated proteins, and releases repaired proteins and lactate or glycolate, respectively. Deglycates cysteine, arginine and lysine residues in proteins, and thus reactivates these proteins by reversing glycation by glyoxals. Acts on early glycation intermediates (hemithioacetals and aminocarbinols), preventing the formation of Schiff bases and advanced glycation endproducts (AGE). Also functions as a nucleotide deglycase able to repair glycated guanine in the free nucleotide pool (GTP, GDP, GMP, dGTP) and in DNA and RNA. Is thus involved in a major nucleotide repair system named guanine glycation repair (GG repair), dedicated to reversing methylglyoxal and glyoxal damage via nucleotide sanitization and direct nucleic acid repair. Plays an important role in protecting cells from carbonyl stress. This Staphylococcus aureus (strain Mu3 / ATCC 700698) protein is Protein/nucleic acid deglycase HchA.